Consider the following 136-residue polypeptide: HTH-type transcriptional regulator LrpA (136 aa).

An HTH asnC-type domain is found at 2 to 63 (IDEIDKKILD…EVNQVKLGFS (62 aa)). Residues 21–40 (MKKLGEKVHLTAPATASRVV) constitute a DNA-binding region (H-T-H motif).

Functionally, negative regulation of glyA transcription and kinB-dependent sporulation. The chain is HTH-type transcriptional regulator LrpA (lrpA) from Bacillus subtilis (strain 168).